Here is a 502-residue protein sequence, read N- to C-terminus: MLALWVLAVALVAYFLCLSIYRLFLHPLANIPGPKLCALTGWYEVFWDIVVGGQFTFKIEEWHKTYGPVMRIGPNEVHFNDPDFYNELYTTTAAYQKPAEWRYRFGFGSALFDTVDHEHHAKRRAPLAAFFSRSKILEFSPFIQEQTDLLVQRIQEYEGQVICANEAFDALTMDIIGYYAFGLSYRSIDYPKFQAPCNHVTEDVARMVHTGAHFPWVFTILRSIPQAIVSLLAPPMKKIFKFNEEIAAQIRRILKNRVNLDQEKNFHRTIFHEILNSKLDPSELTQERLQMEAGSLVGAALETSKMTTALAIYYILAQPDVEKKLREELRTAMPDPGKILSVPELEQLPYLAACIREALRLAIGVSQRIRRYNPHAPTQYKNYTIPPNTVFGMCHWEQLRDARVWDRPYEFLPERWLANNGNPLALNGQPLAKYFVPFHRGPRGCLGKEMGMAQLNIGLATLFRRVDHLELFETDQSAVDIVADYFVPLCVKGSKGVRVLVK.

Residues 3–25 (ALWVLAVALVAYFLCLSIYRLFL) form a helical membrane-spanning segment. N-linked (GlcNAc...) asparagine glycosylation is present at Asn382. Position 445 (Cys445) interacts with heme.

The protein belongs to the cytochrome P450 family. Heme serves as cofactor.

It is found in the membrane. It functions in the pathway mycotoxin biosynthesis. Its function is as follows. Cytochrome P450 monooxygenase; part of the gene cluster that mediates the biosynthesis of brefeldin A (BFA), a protein transport inhibitor that shows antiviral, antifungal, and antitumor properties. The proposed biosynthesis of BFA involves formation of an acyclic polyketide chain that is differentially tailored throughout the backbone. The highly reducing polyketide synthase Bref-PKS is proposed to synthesize the precisely reduced octaketide precursor, which could then be directly offloaded by the thiohydrolase enzyme Bref-TH followed by a cytochrome P450 monooxygenase-mediated formation of the cyclopentane ring and macrocyclization to afford 7-deoxy BFA. Alternatively, the first ring annulation can also occur on the ACP-tethered intermediate before the thiohydrolase release and lactonization. The C7-hydroxylation by another cytochrome P450 monooxygenase is believed to be the final step in the process to obtain the final structure of BFA. In addition to the HRPKS Bref-PKS and the thiohydrolase Bref-TH, the brefeldin A biosynthesis cluster contains 4 cytochrome p450 monooxygenases (called orf3 to orf6), as well a the probable cluster-specific transcription regulator orf8. This Eupenicillium brefeldianum (Penicillium brefeldianum) protein is Cytochrome P450 monooxygenase orf6.